We begin with the raw amino-acid sequence, 206 residues long: MMQIDWRLYAVLDTATLGSRDPLAMTAALLAGGIGVLQLRAKNLSVRQTAQLAQAILPLTKIAQIPLIINDDLGLALAVGADGVHLGVDDLPLDLARASFKGLIGYSPEGVADAQRAEKLGVDYLGVGPFAATTTKLDAGAPLGQAGLRAIVEAVDCPVVAIGGIAQHNVAEVRACGVAGIVVVSALLNATNPTQACREFLAHYKE.

Residues 38 to 42 (QLRAK) and asparagine 70 contribute to the 4-amino-2-methyl-5-(diphosphooxymethyl)pyrimidine site. Mg(2+) is bound by residues aspartate 71 and aspartate 90. 4-amino-2-methyl-5-(diphosphooxymethyl)pyrimidine is bound at residue serine 107. 133 to 135 (TTT) provides a ligand contact to 2-[(2R,5Z)-2-carboxy-4-methylthiazol-5(2H)-ylidene]ethyl phosphate. 4-amino-2-methyl-5-(diphosphooxymethyl)pyrimidine is bound at residue lysine 136. 2-[(2R,5Z)-2-carboxy-4-methylthiazol-5(2H)-ylidene]ethyl phosphate-binding positions include glycine 164 and 184–185 (VS).

The protein belongs to the thiamine-phosphate synthase family. Mg(2+) is required as a cofactor.

It carries out the reaction 2-[(2R,5Z)-2-carboxy-4-methylthiazol-5(2H)-ylidene]ethyl phosphate + 4-amino-2-methyl-5-(diphosphooxymethyl)pyrimidine + 2 H(+) = thiamine phosphate + CO2 + diphosphate. It catalyses the reaction 2-(2-carboxy-4-methylthiazol-5-yl)ethyl phosphate + 4-amino-2-methyl-5-(diphosphooxymethyl)pyrimidine + 2 H(+) = thiamine phosphate + CO2 + diphosphate. The enzyme catalyses 4-methyl-5-(2-phosphooxyethyl)-thiazole + 4-amino-2-methyl-5-(diphosphooxymethyl)pyrimidine + H(+) = thiamine phosphate + diphosphate. It participates in cofactor biosynthesis; thiamine diphosphate biosynthesis; thiamine phosphate from 4-amino-2-methyl-5-diphosphomethylpyrimidine and 4-methyl-5-(2-phosphoethyl)-thiazole: step 1/1. Condenses 4-methyl-5-(beta-hydroxyethyl)thiazole monophosphate (THZ-P) and 2-methyl-4-amino-5-hydroxymethyl pyrimidine pyrophosphate (HMP-PP) to form thiamine monophosphate (TMP). This is Thiamine-phosphate synthase from Herpetosiphon aurantiacus (strain ATCC 23779 / DSM 785 / 114-95).